A 349-amino-acid chain; its full sequence is Isopentenyl-diphosphate delta-isomerase (349 aa).

6–7 (RK) lines the substrate pocket. FMN is bound by residues 62-64 (AMT), Ser-93, and Asn-122. Substrate is bound at residue Gln-152. A Mg(2+)-binding site is contributed by Glu-153. FMN is bound by residues Lys-184, Thr-214, 258-259 (GG), and 280-281 (AG).

The protein belongs to the IPP isomerase type 2 family. As to quaternary structure, homooctamer. Dimer of tetramers. Requires FMN as cofactor. NADPH is required as a cofactor. The cofactor is Mg(2+).

It is found in the cytoplasm. The enzyme catalyses isopentenyl diphosphate = dimethylallyl diphosphate. Functionally, involved in the biosynthesis of isoprenoids. Catalyzes the 1,3-allylic rearrangement of the homoallylic substrate isopentenyl (IPP) to its allylic isomer, dimethylallyl diphosphate (DMAPP). This is Isopentenyl-diphosphate delta-isomerase from Bacillus cereus (strain AH820).